We begin with the raw amino-acid sequence, 189 residues long: Interferon alpha-8 (189 aa).

The N-terminal stretch at 1-23 is a signal peptide; that stretch reads MALTFYLLVALVVLSYKSFSSLG. Disulfide bonds link Cys-24-Cys-122 and Cys-52-Cys-162.

It belongs to the alpha/beta interferon family.

It localises to the secreted. Its function is as follows. Produced by macrophages, IFN-alpha have antiviral activities. Interferon stimulates the production of two enzymes: a protein kinase and an oligoadenylate synthetase. This is Interferon alpha-8 (IFNA8) from Homo sapiens (Human).